The chain runs to 214 residues: Nicotinamidase (214 aa).

Asp18 serves as the catalytic Proton acceptor. Residues Asp56, His58, His62, and His91 each contribute to the a divalent metal cation site. Lys116 is an active-site residue. Cys161 (nucleophile) is an active-site residue.

This sequence belongs to the isochorismatase family. Requires a divalent metal cation as cofactor.

It carries out the reaction nicotinamide + H2O = nicotinate + NH4(+). It participates in cofactor biosynthesis; nicotinate biosynthesis; nicotinate from nicotinamide: step 1/1. Catalyzes the deamidation of nicotinamide (NAM) into nicotinate (Na). Functions in the deamidating salvage pathway for production of NAD from nicotinamide. In Acinetobacter baylyi (strain ATCC 33305 / BD413 / ADP1), this protein is Nicotinamidase.